Here is a 362-residue protein sequence, read N- to C-terminus: Flagellar P-ring protein (362 aa).

Residues 1–18 (MKHIALIVLYFLSFSVQA) form the signal peptide.

This sequence belongs to the FlgI family. In terms of assembly, the basal body constitutes a major portion of the flagellar organelle and consists of four rings (L,P,S, and M) mounted on a central rod.

The protein localises to the periplasm. It localises to the bacterial flagellum basal body. Assembles around the rod to form the L-ring and probably protects the motor/basal body from shearing forces during rotation. This chain is Flagellar P-ring protein, found in Marinomonas sp. (strain MWYL1).